The following is a 146-amino-acid chain: Hemoglobin subunit beta (146 aa).

Residue valine 1 is modified to N-acetylvaline. A Globin domain is found at 2–146; sequence QLSGEEKAAV…VANALAHKYH (145 aa). Position 44 is a phosphoserine (serine 44). Lysine 59 carries the N6-acetyllysine modification. Position 63 (histidine 63) interacts with heme b. The residue at position 82 (lysine 82) is an N6-acetyllysine. Histidine 92 contributes to the heme b binding site. Cysteine 93 is modified (S-nitrosocysteine). Residue lysine 144 is modified to N6-acetyllysine.

The protein belongs to the globin family. As to quaternary structure, heterotetramer of two alpha chains and two beta chains. Red blood cells.

Involved in oxygen transport from the lung to the various peripheral tissues. This is Hemoglobin subunit beta (HBB) from Equus caballus (Horse).